Here is a 90-residue protein sequence, read N- to C-terminus: Acylphosphatase (90 aa).

Residues 3–90 (QYHMIADGRV…KGYRTFSISY (88 aa)) enclose the Acylphosphatase-like domain. Active-site residues include Arg18 and Asn36.

It belongs to the acylphosphatase family.

The enzyme catalyses an acyl phosphate + H2O = a carboxylate + phosphate + H(+). This is Acylphosphatase (acyP) from Bacillus velezensis (strain DSM 23117 / BGSC 10A6 / LMG 26770 / FZB42) (Bacillus amyloliquefaciens subsp. plantarum).